The sequence spans 438 residues: Glycerophosphocholine cholinephosphodiesterase ENPP6 (438 aa).

Residues 1-22 (MTRTLLKIYTLFILLLCRQRDA) form the signal peptide. Positions 32, 69, and 90 each coordinate substrate. Residues Asp32 and Ser69 each coordinate Zn(2+). Ser69 serves as the catalytic Nucleophile. Ser69 is subject to Phosphoserine. Cys140 and Cys152 are oxidised to a cystine. Residues 162-226 (KNLTDSMENA…ILNQKIREKN (65 aa)) are a coiled coil. An N-linked (GlcNAc...) asparagine glycan is attached at Asn163. Asp191 contributes to the substrate binding site. Zn(2+)-binding residues include Asp191, His195, Asp238, and His239. Position 239 (His239) interacts with substrate. 3 N-linked (GlcNAc...) asparagine glycosylation sites follow: Asn258, Asn287, and Asn339. His352 contacts substrate. Zn(2+) is bound at residue His352. Asn402 is a glycosylation site (N-linked (GlcNAc...) asparagine). A lipid anchor (GPI-anchor amidated serine) is attached at Ser415. Positions 416–438 (AATAGASLISCCFLLLLTLTGVC) are cleaved as a propeptide — removed in mature form.

This sequence belongs to the nucleotide pyrophosphatase/phosphodiesterase family. Zn(2+) serves as cofactor.

The protein resides in the cell membrane. It catalyses the reaction sn-glycerol 3-phosphocholine + H2O = phosphocholine + glycerol + H(+). The enzyme catalyses a 1-acyl-sn-glycero-3-phosphocholine + H2O = a 1-acyl-sn-glycerol + phosphocholine + H(+). It carries out the reaction a 1-O-alkyl-sn-glycero-3-phosphocholine + H2O = a 1-O-alkyl-sn-glycerol + phosphocholine + H(+). The catalysed reaction is 1-dodecanoyl-sn-glycero-3-phosphocholine + H2O = 1-dodecanoyl-sn-glycerol + phosphocholine + H(+). It catalyses the reaction 1-hexadecanoyl-sn-glycero-3-phosphocholine + H2O = 1-hexadecanoyl-sn-glycerol + phosphocholine + H(+). The enzyme catalyses 1-(5Z,8Z,11Z,14Z-eicosatetraenoyl)-sn-glycero-3-phosphocholine + H2O = 1-(5Z,8Z,11Z,14Z-eicosatetraenoyl)-sn-glycerol + phosphocholine + H(+). It carries out the reaction 1-tetradecanoyl-sn-glycero-3-phosphocholine + H2O = 1-tetradecanoyl-sn-glycerol + phosphocholine + H(+). The catalysed reaction is sphing-4-enine-phosphocholine + H2O = sphing-4-enine + phosphocholine + H(+). It catalyses the reaction 1-(9Z-octadecenoyl)-sn-glycero-3-phosphocholine + H2O = 1-(9Z-octadecenoyl)-sn-glycerol + phosphocholine + H(+). The enzyme catalyses 1-(9Z,12Z)-octadecadienoyl-sn-glycero-3-phosphocholine + H2O = 1-(9Z,12Z-octadecadienoyl)-sn-glycerol + phosphocholine + H(+). It carries out the reaction glycero-2-phosphocholine + H2O = phosphocholine + glycerol + H(+). Functionally, choline-specific glycerophosphodiesterase that hydrolyzes glycerophosphocholine (GPC) and lysophosphatidylcholine (LPC) and contributes to supplying choline to the cells. Has a preference for LPC with short (12:0 and 14:0) or polyunsaturated (18:2 and 20:4) fatty acids. In vitro, hydrolyzes only choline-containing lysophospholipids, such as sphingosylphosphorylcholine (SPC), platelet-activating factor (PAF) and lysoPAF, but not other lysophospholipids. This chain is Glycerophosphocholine cholinephosphodiesterase ENPP6, found in Danio rerio (Zebrafish).